The sequence spans 124 residues: Large ribosomal subunit protein bL19 (124 aa).

This sequence belongs to the bacterial ribosomal protein bL19 family.

This protein is located at the 30S-50S ribosomal subunit interface and may play a role in the structure and function of the aminoacyl-tRNA binding site. This Cereibacter sphaeroides (strain ATCC 17029 / ATH 2.4.9) (Rhodobacter sphaeroides) protein is Large ribosomal subunit protein bL19.